We begin with the raw amino-acid sequence, 117 residues long: Cysteine rich necrotrophic effector Tox1 (117 aa).

The first 17 residues, methionine 1–alanine 17, serve as a signal peptide directing secretion. 8 cysteine pairs are disulfide-bonded: cysteine 36–cysteine 87, cysteine 44–cysteine 55, cysteine 53–cysteine 58, cysteine 54–cysteine 98, cysteine 63–cysteine 83, cysteine 67–cysteine 117, cysteine 86–cysteine 97, and cysteine 107–cysteine 110. The chitin-binding domain stretch occupies residues cysteine 87 to cysteine 117.

Interacts with host cell wall-associated kinase receptor Snn1.

The protein resides in the secreted. Its function is as follows. Necrotrophic effector that plays a critical role during fungal penetration, via its interaction with the host Snn1 protein. Snn1 is a member of the wall-associated kinase class of receptors, which are known to drive pathways for biotrophic pathogen resistance. Recognition of Tox1 by Snn1 induces mitogen-activated protein kinase genes such as MAPK3 and activates programmed cell death, which allows this necrotroph to gain nutrients and sporulate. Recognition of Tox1 by Snn1 also induces other plant defense responses, including oxidative burst and pathogenesis related (PR) gene expression. The development of necrosis and disease induced by Tox1, and particularly penetration during infection, requires light, which is probably related to the light-dependent expression of host Snn1. Tox1 plays an additional role in providing significant protection from wheat chitinases by binding chitin in the fungal cell wall. In Phaeosphaeria nodorum (strain SN15 / ATCC MYA-4574 / FGSC 10173) (Glume blotch fungus), this protein is Cysteine rich necrotrophic effector Tox1.